The chain runs to 387 residues: Cystathionine gamma-lyase (387 aa).

Residues Arg-53, Tyr-105, and Arg-110 each contribute to the substrate site. N6-(pyridoxal phosphate)lysine is present on Lys-202. Glu-329 is a binding site for substrate.

Belongs to the trans-sulfuration enzymes family. Homotetramer. Interacts with CALM in a calcium-dependent manner. Pyridoxal 5'-phosphate is required as a cofactor.

It is found in the cytoplasm. It catalyses the reaction L,L-cystathionine + H2O = 2-oxobutanoate + L-cysteine + NH4(+). The enzyme catalyses L-cysteine + H2O = hydrogen sulfide + pyruvate + NH4(+) + H(+). The catalysed reaction is L-homocysteine + H2O = 2-oxobutanoate + hydrogen sulfide + NH4(+) + H(+). It carries out the reaction L-homoserine = 2-oxobutanoate + NH4(+). It participates in amino-acid biosynthesis; L-cysteine biosynthesis; L-cysteine from L-homocysteine and L-serine: step 2/2. In terms of biological role, catalyzes the last step in the trans-sulfuration pathway from L-methionine to L-cysteine in a pyridoxal-5'-phosphate (PLP)-dependent manner, which consists on cleaving the L,L-cystathionine molecule into L-cysteine, ammonia and 2-oxobutanoate. Part of the L-cysteine derived from the trans-sulfuration pathway is utilized for biosynthesis of the ubiquitous antioxidant glutathione. Besides its role in the conversion of L-cystathionine into L-cysteine, it utilizes L-cysteine and L-homocysteine as substrates (at much lower rates than L,L-cystathionine) to produce the endogenous gaseous signaling molecule hydrogen sulfide (H2S). The sequence is that of Cystathionine gamma-lyase (cysA) from Dictyostelium discoideum (Social amoeba).